The following is a 133-amino-acid chain: Large ribosomal subunit protein eL32y (133 aa).

Belongs to the eukaryotic ribosomal protein eL32 family.

The sequence is that of Large ribosomal subunit protein eL32y (RPL32B) from Arabidopsis thaliana (Mouse-ear cress).